A 679-amino-acid chain; its full sequence is ATP-dependent zinc metalloprotease FtsH (679 aa).

At 1 to 6 the chain is on the cytoplasmic side; the sequence is MNRIFR. A helical transmembrane segment spans residues 7 to 27; it reads NTIFYLLIFLVIVGIVSVFNS. Residues 28-114 are Extracellular-facing; it reads DQTETENVSF…IEPADETSGW (87 aa). Residues 115–135 form a helical membrane-spanning segment; sequence VQFFTGIIPFIIIFILFFFLL. Residues 136 to 679 are Cytoplasmic-facing; that stretch reads SQAQGGGSRV…SFEDDTNKKE (544 aa). ATP is bound at residue 206–213; sequence GPPGTGKT. His428 provides a ligand contact to Zn(2+). The active site involves Glu429. Residues His432 and Asp504 each coordinate Zn(2+). 2 stretches are compositionally biased toward basic and acidic residues: residues 621-642 and 658-679; these read LEKE…KEET and PIEK…NKKE. A disordered region spans residues 621-679; the sequence is LEKEKASESDVKVNINSKKEETPQVEAEQPQEPNTDEPIEKDPSVEDNRSFEDDTNKKE.

This sequence in the central section; belongs to the AAA ATPase family. It in the C-terminal section; belongs to the peptidase M41 family. Homohexamer. The cofactor is Zn(2+).

The protein resides in the cell membrane. Functionally, acts as a processive, ATP-dependent zinc metallopeptidase for both cytoplasmic and membrane proteins. Plays a role in the quality control of integral membrane proteins. This Alkalihalophilus pseudofirmus (strain ATCC BAA-2126 / JCM 17055 / OF4) (Bacillus pseudofirmus) protein is ATP-dependent zinc metalloprotease FtsH.